Reading from the N-terminus, the 667-residue chain is Probable oxidoreductase YyaE (667 aa).

Positions 2–59 (SKVHQSACPLNCWDSCGFLVTVDDGKVTKVDGDPNHPITEGKICGRGRMLETKTNSPD) constitute a 4Fe-4S Mo/W bis-MGD-type domain. [4Fe-4S] cluster contacts are provided by C9, C13, C17, and C45.

This sequence belongs to the prokaryotic molybdopterin-containing oxidoreductase family. It depends on Mo-bis(molybdopterin guanine dinucleotide) as a cofactor.

This chain is Probable oxidoreductase YyaE (yyaE), found in Bacillus subtilis (strain 168).